The primary structure comprises 607 residues: CUB and zona pellucida-like domain-containing protein 1 (607 aa).

The signal sequence occupies residues 1–24 (MELVRRLMPLTLLILSCLAELTMA). Cys-17 and Cys-58 are joined by a disulfide. CUB domains follow at residues 25–146 (EAEG…YFFS) and 154–265 (CGGY…YTSI). Residues 25-568 (EAEGNASCTV…EETPNQPFNS (544 aa)) lie on the Lumenal side of the membrane. Asn-29, Asn-57, and Asn-67 each carry an N-linked (GlcNAc...) asparagine glycan. 3 disulfides stabilise this stretch: Cys-85–Cys-107, Cys-154–Cys-180, and Cys-207–Cys-229. One can recognise a ZP domain in the interval 276–519 (TCSSDRMRVI…SRCNQGCVSR (244 aa)). Asn-394 and Asn-419 each carry an N-linked (GlcNAc...) asparagine glycan. Residues Cys-442 and Cys-498 are joined by a disulfide bond. A helical membrane pass occupies residues 569 to 589 (VHLFSFMVLALNVVTVATITV). At 590–607 (RHFVNQRADYKYQKLQNY) the chain is on the cytoplasmic side.

In terms of tissue distribution, detected in pancreas and epithelium of ovary. Expressed at higher levels in ovarian tumors than in normal tissue.

The protein resides in the zymogen granule membrane. Localized to zymogen granules, where it functions in trypsinogen activation. May indirectly regulate cell motility, cell-cell and cell/extracellular matrix interactions. This Homo sapiens (Human) protein is CUB and zona pellucida-like domain-containing protein 1.